The following is a 134-amino-acid chain: Large ribosomal subunit protein bL20 (134 aa).

Belongs to the bacterial ribosomal protein bL20 family.

Binds directly to 23S ribosomal RNA and is necessary for the in vitro assembly process of the 50S ribosomal subunit. It is not involved in the protein synthesizing functions of that subunit. The protein is Large ribosomal subunit protein bL20 of Brucella anthropi (strain ATCC 49188 / DSM 6882 / CCUG 24695 / JCM 21032 / LMG 3331 / NBRC 15819 / NCTC 12168 / Alc 37) (Ochrobactrum anthropi).